Here is a 107-residue protein sequence, read N- to C-terminus: Keratin, type I cytoskeletal 20 (107 aa).

The segment at 1 to 7 (GNLWVGN) is head. A coil 1A region spans residues 8–43 (EKMTMKNLNDRLASYLEKVRSLEQSNSKFELQIKQW). Residues 8 to 107 (EKMTMKNLND…ETERGIRLAV (100 aa)) enclose the IF rod domain. The interval 44 to 61 (YESNTPGISRDHSAYLQQ) is linker 1. Residues 62 to 107 (IQDLRNQIRDAQLQNARCVLQIDNAKLAAEDFRLKYETERGIRLAV) form a coil 1B region.

The protein belongs to the intermediate filament family. In terms of assembly, heterotetramer of two type I and two type II keratins. Associates with KRT8.

Functionally, plays a significant role in maintaining keratin filament organization in intestinal epithelia. When phosphorylated, plays a role in the secretion of mucin in the small intestine. The protein is Keratin, type I cytoskeletal 20 of Sus scrofa (Pig).